Consider the following 209-residue polypeptide: Small ribosomal subunit protein uS4 (209 aa).

The region spanning 98 to 164 (SRLDNVVYRG…TPFIVARETA (67 aa)) is the S4 RNA-binding domain.

It belongs to the universal ribosomal protein uS4 family. As to quaternary structure, part of the 30S ribosomal subunit. Contacts protein S5. The interaction surface between S4 and S5 is involved in control of translational fidelity.

One of the primary rRNA binding proteins, it binds directly to 16S rRNA where it nucleates assembly of the body of the 30S subunit. In terms of biological role, with S5 and S12 plays an important role in translational accuracy. This chain is Small ribosomal subunit protein uS4, found in Frankia alni (strain DSM 45986 / CECT 9034 / ACN14a).